The chain runs to 321 residues: Cytochrome f (321 aa).

Positions 1-37 are cleaved as a signal peptide; it reads MKIYRQIKQSFSITKIVFSFFISLLLNLVAQPTICQA. Heme-binding residues include Phe38, Cys58, Cys61, and His62. Residues 287-306 form a helical membrane-spanning segment; it reads VQGLIAFFISVVLAQIFLVL.

It belongs to the cytochrome f family. The 4 large subunits of the cytochrome b6-f complex are cytochrome b6, subunit IV (17 kDa polypeptide, petD), cytochrome f and the Rieske protein, while the 4 small subunits are PetG, PetL, PetM and PetN. The complex functions as a dimer. It depends on heme as a cofactor.

It localises to the plastid. Its subcellular location is the cyanelle thylakoid membrane. In terms of biological role, component of the cytochrome b6-f complex, which mediates electron transfer between photosystem II (PSII) and photosystem I (PSI), cyclic electron flow around PSI, and state transitions. The sequence is that of Cytochrome f (petA) from Cyanophora paradoxa.